A 751-amino-acid polypeptide reads, in one-letter code: Zinc finger protein 337 (751 aa).

The KRAB domain occupies 12 to 83 (LAFGDVTVDF…ERRRRPGPCA (72 aa)). The segment covering 101–116 (QRQQQLQFSDQSFQSD) has biased composition (low complexity). The disordered stretch occupies residues 101 to 163 (QRQQQLQFSD…SSQGQRENPT (63 aa)). The C2H2-type 1; degenerate zinc-finger motif lies at 180–202 (FKCAERGQDFSRKMMVIIHKKAH). 9 C2H2-type zinc fingers span residues 208 to 230 (FTCRECHQGFRDESALLLHQNTH), 236 to 258 (YVCSVCGRGFSLKANLLRHQRTH), 264 to 286 (FLCKVCGRGYTSKSYLTVHERTH), 292 to 314 (YECQECGRRFNDKSSYNKHLKAH), 320 to 342 (FVCKECGRGYTNKSYFVVHKRIH), 348 to 370 (YRCQECGRGFSNKSHLITHQRTH), 376 to 398 (FACRQCKQSFSVKGSLLRHQRTH), 404 to 426 (FVCKDCERSFSQKSTLVYHQRTH), and 432 to 454 (FVCRECGQGFIQKSTLVKHQITH). A Glycyl lysine isopeptide (Lys-Gly) (interchain with G-Cter in SUMO2) cross-link involves residue Lys-458. 10 consecutive C2H2-type zinc fingers follow at residues 460–482 (FVCKDCGRGFIQKSTFTLHQRTH), 488–510 (YGCRECGRRFRDKSSYNKHLRAH), 516–538 (FFCRDCGRGFTLKPNLTIHQRTH), 544–566 (FMCKQCEKSFSLKANLLRHQWTH), 572–594 (FNCKDCGRGFILKSTLLFHQKTH), 600–622 (FICSECGQGFIWKSNLVKHQLAH), 628–650 (FVCKECGRGFNWKGNLLTHQRTH), 656–679 (FVCNVCGQGFSWKRSLTRHHWRIH), 685–707 (FVCQECKRGYTSKSDLTVHERIH), and 713–735 (YECQECGRKFSNKSYYSKHLKRH).

It belongs to the krueppel C2H2-type zinc-finger protein family.

The protein resides in the nucleus. Functionally, may be involved in transcriptional regulation. In Homo sapiens (Human), this protein is Zinc finger protein 337 (ZNF337).